The primary structure comprises 510 residues: Hydroperoxide bicyclase CYP5164A3, mitochondrial (510 aa).

The transit peptide at 1 to 31 directs the protein to the mitochondrion; that stretch reads MQRVGAASPTCSSLQAPAAAPPILTISPHHR. Cysteine 452 serves as a coordination point for heme.

The protein belongs to the cytochrome P450 family. The cofactor is heme.

It localises to the mitochondrion. It catalyses the reaction (13S)-hydroperoxy-(9Z,11E,15Z)-octadecatrienoate = plasmodiophorol A. The catalysed reaction is (13S)-hydroperoxy-(9Z,11E,15Z)-octadecatrienoate = plasmodiophorol B. It carries out the reaction (13S)-hydroperoxy-(9Z,11E,15Z)-octadecatrienoate = ectocarpin A + H2O. The enzyme catalyses (15S)-hydroperoxy-(5Z,8Z,11Z,13E,17Z)-eicosapentaenoate = ectocarpin B + H2O. It catalyses the reaction (15S)-hydroperoxy-(5Z,8Z,11Z,13E,17Z)-eicosapentaenoate = ectocarpin C. The catalysed reaction is (15S)-hydroperoxy-(5Z,8Z,11Z,13E,17Z)-eicosapentaenoate + H2O = ectocarpin D. It carries out the reaction (15S)-hydroperoxy-(5Z,8Z,11Z,13E,17Z)-eicosapentaenoate = 14-oxo-15-hydroxy-(5Z,8Z,11Z,17Z)-eicosatetraenoate. The protein operates within lipid metabolism; oxylipin biosynthesis. In terms of biological role, cytochrome P450 hydroperoxide bicyclase involved in the metabolism of oxylipins 'ectocarpins' natural products, such as hybridalactone, ecklonilactones and derivatives. Isomerizes the hydroperoxides into epoxyalcohols via epoxyallylic radical. Can use alpha-linolenic acid 13(S)-hydroperoxide (13-HPOTE) and eicosapentaenoic acid 15(S)-hydroperoxide (15-HPEPE) as preferred substrate to produce corresponding heterobicyclic oxylipins, such as plasmodiophorol A (6-oxabicyclo[3.1.0]hexane), plasmodiophorol B (2-oxabicyclo[2.2.1]heptane) and plasmodiophorol C (4-hydroxymethyl-1,2-dihydroxycyclopentane) as well as ectocarpin A (3-propenyl-6-oxabicyclo[3.1.0]hexane) formed at about 15:3:3:1 ratio for 13-HPOTE, and analogous to plasmodiophorols A and B including ectocarpin B (3-[(1'E)-propenyl]-6-oxabicyclo[3.1.0]hexane), ectocarpin C, 14-oxo-15-hydroxy-5,8,11,17-eicosate-traenoic acid and ectocarpin D for 15-HPEPE. Barely able to use linoleic acid 13-hydroperoxide (13-HPODE), linoleic acid 9-hydroperoxide (9-HPODE), eicosapentaenoic acid 15-hydroperoxide (15-HPEPE), and alpha-linolenic acid 9-hydroperoxide (9-HPOTE) as substrates. The protein is Hydroperoxide bicyclase CYP5164A3, mitochondrial of Ectocarpus siliculosus (Brown alga).